The following is a 309-amino-acid chain: Aspartate carbamoyltransferase catalytic subunit (309 aa).

Carbamoyl phosphate contacts are provided by arginine 58 and threonine 59. Residue lysine 86 coordinates L-aspartate. Residues arginine 108, histidine 136, and glutamine 139 each coordinate carbamoyl phosphate. L-aspartate-binding residues include arginine 169 and arginine 223. Residues glycine 264 and proline 265 each contribute to the carbamoyl phosphate site.

It belongs to the aspartate/ornithine carbamoyltransferase superfamily. ATCase family. Heterododecamer (2C3:3R2) of six catalytic PyrB chains organized as two trimers (C3), and six regulatory PyrI chains organized as three dimers (R2).

It catalyses the reaction carbamoyl phosphate + L-aspartate = N-carbamoyl-L-aspartate + phosphate + H(+). Its pathway is pyrimidine metabolism; UMP biosynthesis via de novo pathway; (S)-dihydroorotate from bicarbonate: step 2/3. In terms of biological role, catalyzes the condensation of carbamoyl phosphate and aspartate to form carbamoyl aspartate and inorganic phosphate, the committed step in the de novo pyrimidine nucleotide biosynthesis pathway. The protein is Aspartate carbamoyltransferase catalytic subunit of Pelotomaculum thermopropionicum (strain DSM 13744 / JCM 10971 / SI).